A 359-amino-acid polypeptide reads, in one-letter code: DNA polymerase IV (359 aa).

Positions 4–184 (IVHVDMDAFY…LKVNRIPGVG (181 aa)) constitute a UmuC domain. The Mg(2+) site is built by Asp-8 and Asp-102. Residue Glu-103 is part of the active site.

Belongs to the DNA polymerase type-Y family. As to quaternary structure, monomer. The cofactor is Mg(2+).

It localises to the cytoplasm. It catalyses the reaction DNA(n) + a 2'-deoxyribonucleoside 5'-triphosphate = DNA(n+1) + diphosphate. In terms of biological role, poorly processive, error-prone DNA polymerase involved in untargeted mutagenesis. Copies undamaged DNA at stalled replication forks, which arise in vivo from mismatched or misaligned primer ends. These misaligned primers can be extended by PolIV. Exhibits no 3'-5' exonuclease (proofreading) activity. May be involved in translesional synthesis, in conjunction with the beta clamp from PolIII. The protein is DNA polymerase IV of Xanthomonas axonopodis pv. citri (strain 306).